We begin with the raw amino-acid sequence, 215 residues long: Probable phosphoglycerate mutase GpmB (215 aa).

Residues 8–15, 21–22, arginine 58, lysine 60, 82–85, 104–105, and 151–152 each bind substrate; these read RHGETQWN, QG, ELDM, RR, and GI. Histidine 9 functions as the Tele-phosphohistidine intermediate in the catalytic mechanism. Catalysis depends on glutamate 82, which acts as the Proton donor/acceptor.

The protein belongs to the phosphoglycerate mutase family. GpmB subfamily.

The enzyme catalyses (2R)-2-phosphoglycerate = (2R)-3-phosphoglycerate. The protein operates within carbohydrate degradation; glycolysis; pyruvate from D-glyceraldehyde 3-phosphate: step 3/5. This Salmonella paratyphi A (strain AKU_12601) protein is Probable phosphoglycerate mutase GpmB.